The sequence spans 376 residues: Serine-arginine protein 55 (376 aa).

In terms of domain architecture, RRM 1 spans 4 to 74 (SRVYVGGLPY…ERVVVEPARG (71 aa)). A disordered region spans residues 73–114 (RGTARGSNRDRYDDRYGGRRGGGGGRYNEKNKNSRSSSRYGP). Residues 79 to 89 (SNRDRYDDRYG) are compositionally biased toward basic and acidic residues. The RRM 2 domain occupies 120 to 193 (YRLIVENLSS…RRIHLVEDRR (74 aa)). Serine 165 carries the phosphoserine modification. A compositionally biased stretch (basic and acidic residues) spans 185–194 (RIHLVEDRRG). Positions 185–376 (RIHLVEDRRG…PDRNNESMDD (192 aa)) are disordered. The span at 196–205 (RSGGGGGSGR) shows a compositional bias: gly residues. 2 stretches are compositionally biased toward basic residues: residues 215–263 (SRSR…SRSN) and 271–283 (SKSKSHSRTRSRS). A compositionally biased stretch (basic and acidic residues) spans 284–304 (PKRERDSRSRSRSVSKRESRS).

Belongs to the splicing factor SR family. Post-translationally, extensively phosphorylated on serine residues in the RS domain.

Its subcellular location is the nucleus. In terms of biological role, essential for development. May have a critical role in splicing or in controlling alternative splice site use of at least some pre-mRNA in vivo. Not required for all splicing. May play a general role in the condensation or decondensation of chromatin. In Drosophila melanogaster (Fruit fly), this protein is Serine-arginine protein 55 (B52).